The primary structure comprises 296 residues: GTP cyclohydrolase FolE2 (296 aa).

Belongs to the GTP cyclohydrolase IV family.

It carries out the reaction GTP + H2O = 7,8-dihydroneopterin 3'-triphosphate + formate + H(+). It functions in the pathway cofactor biosynthesis; 7,8-dihydroneopterin triphosphate biosynthesis; 7,8-dihydroneopterin triphosphate from GTP: step 1/1. Converts GTP to 7,8-dihydroneopterin triphosphate. The sequence is that of GTP cyclohydrolase FolE2 from Delftia acidovorans (strain DSM 14801 / SPH-1).